The chain runs to 331 residues: Retinol dehydrogenase 13 (331 aa).

Residue serine 2 is modified to N-acetylserine. 45–51 contacts NADP(+); sequence GANTGIG. Residue serine 174 participates in substrate binding. Residue tyrosine 200 is the Proton acceptor of the active site. Serine 323 is subject to Phosphoserine.

It belongs to the short-chain dehydrogenases/reductases (SDR) family. Widely expressed. In the retina, detected in the inner segment of the photoreceptor cells. Weak signals are observed in a small population of inner nuclear neurons and the inner plexiform layer.

The protein resides in the mitochondrion inner membrane. The catalysed reaction is all-trans-retinol + NADP(+) = all-trans-retinal + NADPH + H(+). It participates in cofactor metabolism; retinol metabolism. Its function is as follows. Retinol dehydrogenase with a clear preference for NADP. Oxidizes all-trans-retinol, but seems to reduce all-trans-retinal with much higher efficiency. Has no activity toward steroids. This is Retinol dehydrogenase 13 (RDH13) from Homo sapiens (Human).